Here is a 351-residue protein sequence, read N- to C-terminus: Prostaglandin reductase 2 (351 aa).

Residue 99–100 coordinates substrate; that stretch reads FY. NADP(+) is bound by residues 165–168, Lys-192, Tyr-208, Asn-231, 253–259, 287–289, and Asn-337; these read GACG, CGQISQY, and FLV. 288–290 serves as a coordination point for substrate; sequence LVL.

The protein belongs to the NADP-dependent oxidoreductase L4BD family. In terms of assembly, monomer.

It localises to the cytoplasm. The catalysed reaction is 13,14-dihydro-15-oxo-prostaglandin E2 + NAD(+) = 15-oxoprostaglandin E2 + NADH + H(+). The enzyme catalyses 13,14-dihydro-15-oxo-prostaglandin E2 + NADP(+) = 15-oxoprostaglandin E2 + NADPH + H(+). It catalyses the reaction 13,14-dihydro-15-oxo-PGF2alpha + NADP(+) = 15-oxoprostaglandin F2alpha + NADPH + H(+). It carries out the reaction 13,14-dihydro-15-oxo-prostaglandin E1 + NADP(+) = 15-oxoprostaglandin E1 + NADPH + H(+). The catalysed reaction is 13,14-dihydro-15-oxo-prostaglandin F1alpha + NADP(+) = 15-oxoprostaglandin F1alpha + NADPH + H(+). Functions as 15-oxo-prostaglandin 13-reductase and acts on 15-keto-PGE1, 15-keto-PGE2, 15-keto-PGE1-alpha and 15-keto-PGE2-alpha with highest activity towards 15-keto-PGE2. Overexpression represses transcriptional activity of PPARG and inhibits adipocyte differentiation. The chain is Prostaglandin reductase 2 (PTGR2) from Pongo abelii (Sumatran orangutan).